The sequence spans 275 residues: Methylglyoxal reductase DkgA (275 aa).

Catalysis depends on Tyr51, which acts as the Proton donor. His107 is a binding site for substrate. Ser187–Asn241 is an NADP(+) binding site.

Belongs to the aldo/keto reductase family. In terms of assembly, monomer.

It localises to the cytoplasm. The enzyme catalyses hydroxyacetone + NADP(+) = methylglyoxal + NADPH + H(+). In terms of biological role, aldo-keto reductase that significantly contributes to cellular methylglyoxal detoxification by catalyzing the NADPH-dependent conversion of methylglyoxal to acetol. The protein is Methylglyoxal reductase DkgA of Salmonella typhimurium (strain LT2 / SGSC1412 / ATCC 700720).